A 93-amino-acid polypeptide reads, in one-letter code: Small ribosomal subunit protein bS18 (93 aa).

The protein belongs to the bacterial ribosomal protein bS18 family. As to quaternary structure, part of the 30S ribosomal subunit. Forms a tight heterodimer with protein bS6.

Functionally, binds as a heterodimer with protein bS6 to the central domain of the 16S rRNA, where it helps stabilize the platform of the 30S subunit. The protein is Small ribosomal subunit protein bS18 of Verminephrobacter eiseniae (strain EF01-2).